Consider the following 415-residue polypeptide: MSQGTLYANFRIRTWVPRGLVKALKLDVKVVTPDAAAEQFARDFPLKKVPAFVGPKGYKLTEAMAINYYLVKLSQDDKMKTQLLGADDDLNAQAQIIRWQSLANSDLCIQIANTIVPLKGGAPYNKKSVDSAMDAVDKIVDIFENRLKNYTYLATENISLADLVAASIFTRYFESLFGTEWRAQHPAIVRWFNTVRASPFLKDEYKDFKFADKPLSPPQKKKEKKAPAAAPAASKKKEEAKPAATETETSSKKPKHPLELLGKSTFVLDDWKRKYSNEDTRPVALPWFWEHYNPEEYSLWKVTYKYNDELTLTFMSNNLVGGFFNRLSASTKYMFGCLVVYGENNNNGIVGAVMVRGQDYVPAFDVAPDWESYDYAKLDPTNDDDKEFINNMWAWDKPVSVNGEPKEIVDGKVLK.

Residue serine 2 is modified to N-acetylserine. The region spanning 2–78 (SQGTLYANFR…YLVKLSQDDK (77 aa)) is the GST N-terminal domain. Residue threonine 32 is modified to Phosphothreonine. The GST C-terminal domain occupies 89–215 (DLNAQAQIIR…KDFKFADKPL (127 aa)). A disordered region spans residues 212–256 (DKPLSPPQKKKEKKAPAAAPAASKKKEEAKPAATETETSSKKPKH). The EF-1-gamma C-terminal domain maps to 254–415 (PKHPLELLGK…KEIVDGKVLK (162 aa)).

In terms of assembly, the eukaryotic elongation factor 1 complex (eEF1) is probably a heterohexamer. Two trimeric complexes, each composed of eEF1A (TEF1 or TEF2), eEF1Balpha (EFB1) and eEF1Bgamma (CAM1 or TEF4), are probably dimerized via the eF1Bgamma subunits. The eEF1B subcomplex with the GEF activity is formed of eEF1Balpha and eEF1Bgamma. CAM1 interacts with EFB1. Component of a complex bound to MXR1 promoter region.

Its subcellular location is the cytoplasm. It localises to the nucleus. It participates in protein biosynthesis; polypeptide chain elongation. Functionally, subunit of the eukaryotic elongation factor 1 complex (eEF1). Probably plays a role in anchoring the complex to other cellular components. May be involved in transcriptional regulation of MXR1. This chain is Elongation factor 1-gamma 1 (CAM1), found in Saccharomyces cerevisiae (strain ATCC 204508 / S288c) (Baker's yeast).